A 393-amino-acid polypeptide reads, in one-letter code: NADH-quinone oxidoreductase subunit D (393 aa).

Belongs to the complex I 49 kDa subunit family. NDH-1 is composed of 14 different subunits. Subunits NuoB, C, D, E, F, and G constitute the peripheral sector of the complex.

Its subcellular location is the cell inner membrane. The enzyme catalyses a quinone + NADH + 5 H(+)(in) = a quinol + NAD(+) + 4 H(+)(out). In terms of biological role, NDH-1 shuttles electrons from NADH, via FMN and iron-sulfur (Fe-S) centers, to quinones in the respiratory chain. The immediate electron acceptor for the enzyme in this species is believed to be ubiquinone. Couples the redox reaction to proton translocation (for every two electrons transferred, four hydrogen ions are translocated across the cytoplasmic membrane), and thus conserves the redox energy in a proton gradient. The chain is NADH-quinone oxidoreductase subunit D from Ehrlichia chaffeensis (strain ATCC CRL-10679 / Arkansas).